Consider the following 547-residue polypeptide: Intercellular adhesion molecule 3 (547 aa).

The N-terminal stretch at 1–29 (MATMVPSVLWPRACWTLLVCCLLTPGVQG) is a signal peptide. The Extracellular segment spans residues 30 to 485 (QEFLLRVEPQ…VMDIEAGSSH (456 aa)). The Ig-like C2-type 1 domain maps to 46–103 (GGSLFVNCSTDCPSSEKIALETSLSKELVASGMGWAAFNLSNVTGNSRILCSVYCNGS). N52, N84, N87, N101, N110, and N134 each carry an N-linked (GlcNAc...) asparagine glycan. 2 disulfides stabilise this stretch: C53–C96 and C57–C100. The Ig-like C2-type 2 domain maps to 132 to 197 (GQNFTLRCQV…FSCRTELDMQ (66 aa)). A disulfide bond links C139 and C190. N206, N264, N295, N308, N320, N363, N389, N453, and N457 each carry an N-linked (GlcNAc...) asparagine glycan. The Ig-like C2-type 3 domain maps to 234–301 (ETSWPVDCTL…IVCNVTLGGE (68 aa)). An intrachain disulfide couples C241 to C294. Residues 329–382 (GSTVTVSCMAGARVQVTLDGVPAAAPGQPAQLQLNATESDDRRSFFCSATLEVD) enclose the Ig-like C2-type 4 domain. Residues C336 and C375 are joined by a disulfide bond. The Ig-like C2-type 5 domain maps to 416–469 (KTTHVLQCQARGNPYPELRCLKEGSSREVPVGIPFFVNVTHNGTYQCQASSSRG). C423 and C462 are disulfide-bonded. Residues 486–510 (FVPVFVAVLLTLGVVTIVLALMYVF) form a helical membrane-spanning segment. The Cytoplasmic segment spans residues 511–547 (REHKRSGSYHVREESTYLPLTSMQPTQAMGEEPSRAE).

Belongs to the immunoglobulin superfamily. ICAM family. Interacts with moesin/MSN. In terms of processing, upon stimulation by a physiologic stimuli becomes rapidly and transiently phosphorylated on serine residues. Leukocytes.

The protein resides in the membrane. In terms of biological role, ICAM proteins are ligands for the leukocyte adhesion protein LFA-1 (integrin alpha-L/beta-2). ICAM3 is also a ligand for integrin alpha-D/beta-2. In association with integrin alpha-L/beta-2, contributes to apoptotic neutrophil phagocytosis by macrophages. The polypeptide is Intercellular adhesion molecule 3 (ICAM3) (Pan troglodytes (Chimpanzee)).